The sequence spans 116 residues: NADPH-dependent 7-cyano-7-deazaguanine reductase (116 aa).

Cys-31 acts as the Thioimide intermediate in catalysis. Asp-38 serves as the catalytic Proton donor. Substrate-binding positions include 53 to 55 (IEL) and 72 to 73 (YE).

This sequence belongs to the GTP cyclohydrolase I family. QueF type 1 subfamily.

The protein localises to the cytoplasm. It catalyses the reaction 7-aminomethyl-7-carbaguanine + 2 NADP(+) = 7-cyano-7-deazaguanine + 2 NADPH + 3 H(+). Its pathway is tRNA modification; tRNA-queuosine biosynthesis. In terms of biological role, catalyzes the NADPH-dependent reduction of 7-cyano-7-deazaguanine (preQ0) to 7-aminomethyl-7-deazaguanine (preQ1). The sequence is that of NADPH-dependent 7-cyano-7-deazaguanine reductase from Chlorobium luteolum (strain DSM 273 / BCRC 81028 / 2530) (Pelodictyon luteolum).